A 321-amino-acid polypeptide reads, in one-letter code: Basic peroxidase (321 aa).

Positions 1–30 are cleaved as a signal peptide; the sequence is MSYHKSSGTTLMVPLFMLLISVNYFMSCNA. Gln-31 bears the Pyrrolidone carboxylic acid mark. 4 cysteine pairs are disulfide-bonded: Cys-41–Cys-117, Cys-74–Cys-79, Cys-123–Cys-317, and Cys-202–Cys-228. His-72 acts as the Proton acceptor in catalysis. Asp-73, Val-76, Gly-78, Asp-80, and Ser-82 together coordinate Ca(2+). Position 165 (Pro-165) interacts with substrate. His-195 is a binding site for heme b. Ca(2+) is bound at residue Thr-196. 2 N-linked (GlcNAc...) asparagine glycosylation sites follow: Asn-211 and Asn-221. Ca(2+) contacts are provided by Asp-241, Thr-244, and Asp-249.

This sequence belongs to the peroxidase family. Classical plant (class III) peroxidase subfamily. Heme b is required as a cofactor. Requires Ca(2+) as cofactor. N-glycosylated. Expressed in tracheary elements, roots, young and old hypocotyls, and stems in the partially glycosylated form and in roots and young hypocotyls in the fully glycosylated form. None of the isoforms is significantly expressed in leaves or cotyledons.

Its subcellular location is the secreted. It catalyses the reaction 2 a phenolic donor + H2O2 = 2 a phenolic radical donor + 2 H2O. Its function is as follows. Removal of H(2)O(2), oxidation of toxic reductants, biosynthesis and degradation of lignin, suberization, auxin catabolism, response to environmental stresses such as wounding, pathogen attack and oxidative stress. These functions might be dependent on each isozyme/isoform in each plant tissue. Involved in the synthesis of highly polymerized lignins. The polypeptide is Basic peroxidase (POD3) (Zinnia elegans (Garden zinnia)).